Here is a 426-residue protein sequence, read N- to C-terminus: Protein trichome birefringence-like 19 (426 aa).

Residues 15–35 (LLIAVTIATSLLTIIPLLYPL) form a helical; Signal-anchor for type II membrane protein membrane-spanning segment. The GDS motif signature appears at 142-144 (GDS). Residues 388-402 (DCVHWCLPGPIDNLN) carry the DCXHWCLPGXXDXWN motif motif.

It belongs to the PC-esterase family. TBL subfamily.

It localises to the membrane. May act as a bridging protein that binds pectin and other cell wall polysaccharides. Probably involved in maintaining esterification of pectins. May be involved in the specific O-acetylation of cell wall polymers. This Arabidopsis thaliana (Mouse-ear cress) protein is Protein trichome birefringence-like 19 (TBL19).